We begin with the raw amino-acid sequence, 464 residues long: Protein FAM90A16 (464 aa).

Disordered regions lie at residues 1–42 (MMAR…DPRL), 70–389 (PATL…HDGA), and 415–437 (HSPE…SEAP). 2 stretches are compositionally biased toward basic and acidic residues: residues 74–89 (GKKE…KPRV) and 97–114 (NKDK…DPQR). The segment covering 180–197 (LASLSPLRKASLSSSSSL) has biased composition (low complexity).

The protein belongs to the FAM90 family.

This is Protein FAM90A16 from Homo sapiens (Human).